The sequence spans 210 residues: Putative odorant-binding protein A5 (210 aa).

Positions 1-19 are cleaved as a signal peptide; it reads MKLPALHLLFLGFICLARS.

The protein belongs to the phosphatidylethanolamine-binding protein family. In terms of tissue distribution, cells at the bases of a few scattered sensilla on the posterior surface of the antenna.

Its subcellular location is the secreted. This is Putative odorant-binding protein A5 (a5) from Drosophila melanogaster (Fruit fly).